Here is a 185-residue protein sequence, read N- to C-terminus: Ribosome-recycling factor (185 aa).

The protein belongs to the RRF family.

Its subcellular location is the cytoplasm. Its function is as follows. Responsible for the release of ribosomes from messenger RNA at the termination of protein biosynthesis. May increase the efficiency of translation by recycling ribosomes from one round of translation to another. The polypeptide is Ribosome-recycling factor (Geobacillus sp. (strain WCH70)).